The primary structure comprises 227 residues: Claudin-15 (227 aa).

Position 1 (Met-1) is a topological domain, cytoplasmic. The chain crosses the membrane as a helical span at residues 2–24; it reads SVAVETFGFFMSALGLLMLGLTL. At 25 to 74 the chain is on the extracellular side; sequence SNSYWRVSTVHGNVITTNTIFENLWYSCATDSLGVSNCWDFPSMLALSGY. Cys-52 and Cys-62 form a disulfide bridge. A helical transmembrane segment spans residues 75-99; it reads VQGCRALMITAILLGFLGLFLGMVG. Residues 100–115 are Cytoplasmic-facing; the sequence is LRCTNVGNMDLSKKAK. Phosphoserine is present on Ser-111. The chain crosses the membrane as a helical span at residues 116-140; it reads LLAIAGTLHILAGACGMVAISWYAV. The Extracellular portion of the chain corresponds to 141-159; it reads NITTDFFNPLYAGTKYELG. The interval 146 to 147 is important for the formation of tight-junction strand-like structures; it reads FF. Residues 160–182 form a helical membrane-spanning segment; the sequence is PALYLGWSASLLSILGGICVFST. Over 183–227 the chain is Cytoplasmic; sequence CCCSSKEEPATRAGLPYKPSTVVIPRATSDESDISFGKYGKNAYV. Phosphoserine is present on residues Ser-211, Ser-214, and Ser-217.

Belongs to the claudin family. In terms of assembly, can form homo- and heteropolymeric tight junction strands. Palmitoylated when heterogeneously expressed in S.frugiperda cells. Detected in duodenum, jejunum and ileum. Detected on intestinal villi and crypts (at protein level). Ubiquitous. Detected in small and large intestine, colon, jejunum, heart, kidney and lung.

The protein resides in the cell junction. It localises to the tight junction. It is found in the cell membrane. The catalysed reaction is Na(+)(in) = Na(+)(out). It catalyses the reaction K(+)(in) = K(+)(out). The enzyme catalyses Cs(+)(in) = Cs(+)(out). It carries out the reaction Rb(+)(in) = Rb(+)(out). The catalysed reaction is Li(+)(in) = Li(+)(out). It catalyses the reaction NH4(+)(in) = NH4(+)(out). The enzyme catalyses methylamine(out) = methylamine(in). It carries out the reaction H2O(in) = H2O(out). In terms of biological role, forms paracellular channels: polymerizes in tight junction strands with cation- and water-selective channels through the strands, conveying epithelial permeability in a process known as paracellular tight junction permeability. In intestinal epithelium, allows for sodium and water fluxes from the peritoneal side to the lumen of the intestine to regulate nutrient absorption and intestinal morphogenesis. The protein is Claudin-15 of Mus musculus (Mouse).